A 176-amino-acid polypeptide reads, in one-letter code: MFLIITRDTMFFTAMKNILSKGNVVHIQNEEEIDVMLHQNAFVIIDTLMNNVFHSNFLTQIERLKPVHVIVFSPFNIKRCLGKVPVTFVPRTITIIDFVALINGSYCSVPEANVSLSRKQHQVLSCIANQMTTEDILEKLKISLKTFYCHKHNIMMILNLKRINELVRHQHIDYLV.

Positions 109 to 174 (VPEANVSLSR…ELVRHQHIDY (66 aa)) constitute an HTH luxR-type domain. The H-T-H motif DNA-binding region spans 133–152 (TEDILEKLKISLKTFYCHKH).

Its function is as follows. May act as a transcriptional regulator of dctA. The protein is HTH-type transcriptional regulator DctR (dctR) of Shigella flexneri.